A 170-amino-acid polypeptide reads, in one-letter code: MSRAKAAPVAGPEVAANRAGRQARIVAILSSAQVRSQNELAALLAAEGIEVTQATLSRDLEELGAVKLRGADGGTGIYVVPEDGSPVRGVSGGTDRMARLLGELLVSTDDSGNLAVLRTPPGAAHYLASAIDRAALPQVVGTIAGDDTILVVAREPTTGAQLAGMFENLR.

It belongs to the ArgR family.

The protein localises to the cytoplasm. Its pathway is amino-acid biosynthesis; L-arginine biosynthesis [regulation]. Its function is as follows. Regulates arginine biosynthesis genes. The chain is Arginine repressor from Mycobacterium tuberculosis (strain ATCC 25177 / H37Ra).